Here is a 529-residue protein sequence, read N- to C-terminus: MPIYFLVLKGTGHVQALAFPKSVSDCLGRVTDTEPMLQQSIEACDRVSTETQQLLDILKQQQDDSVLEIQDTLTIAAQGLGPQQRLCAALALLHEREPSIVQQYHDVVGSLSLPEMLKTSHVARSITFHSLLHYERLCTRLHYCHLQQSVHKQKPVRMPGKLRGRWWCQESEPQQVRFGQNVRKHVVSIGGVYAQERCMTTWSTYSVDICLINLSLTRDRPASVGGLQLQVYRISASHAEPSGKRVGHIRHRAGTRQQLQEELCTKKEKLAEMTVLTQEKLSEVIKLREITMASKAESVKLACLQKLVSPQTVSRVLSFSGISYNRLILFYVRQFIFGLAWSLSCQLPLAERHSLSNLVCRYYSDYLDQPSSEVSTKTLLTLALGMQAMLTTRTTYSLISWRLRTSIQTVSTGSVRWILCLSALPTQRLLAQILRNVPWSQRRTQFQIRPISMHHRPYGYQATVQHPPPQSSYEEDGRRPPTQPAHTSLLTYVCSINSEYWQLNDPENCELRSFFFLQSIESMSTPSSH.

The segment at 460 to 484 (YQATVQHPPPQSSYEEDGRRPPTQP) is disordered.

The polypeptide is Heat shock protein 60 (Giardia intestinalis (Giardia lamblia)).